The primary structure comprises 903 residues: DNA-directed DNA polymerase (903 aa).

The interval 103 to 340 is 3'-5'exonuclease; it reads YDHTKIRVAN…VLQIDAKRQF (238 aa). The Mg(2+) site is built by Asp-114, Glu-116, and Asp-222. Residues 248–264 are beta hairpin; that stretch reads TRVKVIENMYGSREIIT. Residues Asp-327, Asp-411, and Leu-412 each contribute to the Mg(2+) site. The segment at 380–903 is polymerase; that stretch reads IPQGRSHPVQ…KASLFDMFDF (524 aa). Residues 414-416, Arg-482, and Lys-560 each bind substrate; that span reads SLY. Position 623 (Asp-623) interacts with Mg(2+). Residues 705–708 form a binding of DNA in B-conformation region; the sequence is KKRY. The interaction with the polymerase clamp stretch occupies residues 897–903; sequence LFDMFDF.

Belongs to the DNA polymerase type-B family. As to quaternary structure, part of the replicase complex that includes the DNA polymerase, the polymerase clamp, the clamp loader complex, the single-stranded DNA binding protein, and the primase/helicase. Interacts with the polymerase clamp; this interaction constitutes the polymerase holoenzyme. Requires Mg(2+) as cofactor.

It catalyses the reaction DNA(n) + a 2'-deoxyribonucleoside 5'-triphosphate = DNA(n+1) + diphosphate. Its function is as follows. Replicates the viral genomic DNA. This polymerase possesses two enzymatic activities: DNA synthesis (polymerase) and an exonucleolytic activity that degrades single-stranded DNA in the 3'- to 5'-direction for proofreading purpose. This Escherichia coli (Bacteriophage RB69) protein is DNA-directed DNA polymerase (43).